The sequence spans 41 residues: uncharacterized protein (41 aa).

The interval 19–41 (NSTRNSSSSSRSSYSSRTTVFSL) is disordered.

This is an uncharacterized protein from Dictyostelium discoideum (Social amoeba).